Reading from the N-terminus, the 388-residue chain is Gastricsin (388 aa).

The N-terminal stretch at 1–16 (MKWMVVAFICLQLLEA) is a signal peptide. The propeptide at 17-59 (TVVKVPLKKFKSIRETMKEKGLLWEFLKTHKHDPARKYRVSDL) is activation peptide. One can recognise a Peptidase A1 domain in the interval 73–385 (YFGEISIGTP…DLGNNRVGFA (313 aa)). Residue D91 is part of the active site. Intrachain disulfides connect C104/C109 and C267/C271. D276 is a catalytic residue. The cysteines at positions 310 and 343 are disulfide-linked.

This sequence belongs to the peptidase A1 family.

The protein resides in the secreted. The enzyme catalyses More restricted specificity than pepsin A, but shows preferential cleavage at Tyr-|-Xaa bonds. High activity on hemoglobin.. With respect to regulation, inhibited by pepstatin. Functionally, hydrolyzes a variety of proteins. This is Gastricsin (PGC) from Callithrix jacchus (White-tufted-ear marmoset).